We begin with the raw amino-acid sequence, 568 residues long: Transport inhibitor response 1-like protein Os11g0515500 (568 aa).

An F-box domain is found at 1–45 (MVFFPEEVVEHILGFLASHRDRNAVSLVCREWYRVERLSRRSVLV). 1D-myo-inositol hexakisphosphate contacts are provided by residues lysine 69, 103–104 (KR), and arginine 335. The tract at residues 338 to 343 (PANANA) is interaction with auxin-responsive proteins. 390-392 (SFR) contributes to the 1D-myo-inositol hexakisphosphate binding site. Positions 394-398 (CVLDP) are interaction with auxin-responsive proteins. Position 425 (arginine 425) interacts with 1D-myo-inositol hexakisphosphate. The tract at residues 453–454 (AF) is interaction with auxin-responsive proteins. 1D-myo-inositol hexakisphosphate contacts are provided by residues 473–474 (KK) and arginine 498.

In terms of assembly, part of a SCF (SKP1-cullin-F-box) protein ligase complex. May interact with auxin and auxin-responsive proteins.

The protein resides in the nucleus. It functions in the pathway protein modification; protein ubiquitination. The sequence is that of Transport inhibitor response 1-like protein Os11g0515500 from Oryza sativa subsp. japonica (Rice).